A 413-amino-acid chain; its full sequence is F-box protein CPR1 (413 aa).

In terms of domain architecture, F-box spans 1 to 48 (MATIPMDIVNDIFLRLPAKTLVRCRALSKPCYHLINDPDFIESHLHRV).

As to quaternary structure, part of a SCF (ASK-cullin-F-box) protein ligase complex. Interacts with SKP1A/ASK1, SPK1B/ASK2, ASK9, ASK10, ASK11, ASK13, ASK14, ASK16, ASK17, ASK18 and ASK19. Interacts with TRAF1B. In terms of tissue distribution, expressed in seedling, root, stem, leaves, inflorescence and silique, especially in veins and trichomes.

It localises to the cytoplasm. The protein resides in the nucleus. It functions in the pathway protein modification; protein ubiquitination. Component of SCF(ASK-cullin-F-box) E3 ubiquitin ligase complexes, which may mediate the ubiquitination and subsequent proteasomal degradation of target proteins. Regulates negatively both salicylic acid (SA)-dependent and SA-independent defense signaling. The sequence is that of F-box protein CPR1 (CPR1) from Arabidopsis thaliana (Mouse-ear cress).